The following is a 246-amino-acid chain: UPF0736 protein GK0808 (246 aa).

This sequence belongs to the UPF0736 family.

In Geobacillus kaustophilus (strain HTA426), this protein is UPF0736 protein GK0808.